Consider the following 86-residue polypeptide: Ferredoxin-like protein YgcO (86 aa).

Residues 45 to 74 (GNLRIDYRSCLECGTCRLLCDESTLQQWRY) form the 4Fe-4S ferredoxin-type domain.

It belongs to the bacterial-type ferredoxin family. FixX subfamily.

Functionally, could be a 3Fe-4S cluster-containing protein. Probably participates in a redox process with YgcN, YgcQ and YgcR. The chain is Ferredoxin-like protein YgcO (ygcO) from Escherichia coli (strain K12).